The sequence spans 507 residues: Cytochrome P450 monooxygenase nodZ (507 aa).

2 consecutive transmembrane segments (helical) span residues 1 to 21 and 205 to 225; these read MITA…FSLL and GFLH…PWFL. Asn-352 carries N-linked (GlcNAc...) asparagine glycosylation. Heme is bound at residue Cys-445.

It belongs to the cytochrome P450 family. Heme serves as cofactor.

The protein resides in the membrane. Its pathway is secondary metabolite biosynthesis. Cytochrome P450 monooxygenase; part of the gene cluster that mediates the biosynthesis of the indole diterpenes nodulisporic acids (NA). Nodulisporic acid A (NAA) and its chemically modified derivatives are of particular significance because of their highly potent insecticidal activity against blood-feeding arthropods and lack of observable adverse effects on mammals, in particular the tremogenicity associated with the paspaline-derived IDTs is not observed. The geranylgeranyl diphosphate (GGPP) synthase ggs1, localized outside of the cluster, is proposed to catalyze the first step in nodulisporic acid biosynthesis via conversion of farnesyl pyrophosphate and isopentyl pyrophosphate into geranylgeranyl pyrophosphate (GGPP). Condensation of indole-3-glycerol phosphate with GGPP by the prenyl transferase nodC then forms 3-geranylgeranylindole (3-GGI). Epoxidation by the FAD-dependent monooxygenase nodM leads to a single-epoxidized-GGI that is substrate of the terpene cyclase nodB for cyclization to yield emindole SB. The terminal methyl carbon, C28, of emindole SB is then oxidized by the cytochrome P450 monooxygenase nodW to produce nodulisporic acid F (NAF), the pentacyclic core of NAA. NAF is converted to nodulisporic acid E (NAE) via prenylation. This step is probably performed by one of the indole diterpene prenyltransferases nodD1 or nodD2. Several oxidation steps performed by the FAD-linked oxidoreductase nodO and one of the cytochrome P450 monooxygenase nodR, nodX or nodZ further convert NAE to nodulisporic acid D (NAD). NAD is substrate of cytochrome P450 monooxygenase nodJ to produce the precursor of nodulisporic acid C (NAC), converted to NAC by one of the indole diterpene prenyltransferases nodD1 or nodD2. The FAD-dependent monooxygenase nodY2 then oxidizes NAC to nodulisporic acid B (NAB). Finally NAB is converted to NAA by one of the cytochrome P450 monooxygenases nodR, nodX or nodZ. The protein is Cytochrome P450 monooxygenase nodZ of Hypoxylon pulicicidum.